The primary structure comprises 245 residues: PF03932 family protein CutC (245 aa).

It belongs to the CutC family.

Its subcellular location is the cytoplasm. This Rhizobium meliloti (strain 1021) (Ensifer meliloti) protein is PF03932 family protein CutC.